Reading from the N-terminus, the 208-residue chain is Mediator of RNA polymerase II transcription subunit 21 (208 aa).

Residues 52 to 122 are disordered; the sequence is TKNSTAPPAP…PDSPRTFASR (71 aa). Residues 63–83 show a composition bias toward low complexity; it reads GAPAGSQASPQQQSAQIPGQQ. The segment covering 84-104 has biased composition (gly residues); sequence QQGGGDAGQTPGAGGGTGGAG. Residues 146–195 adopt a coiled-coil conformation; the sequence is GIDSSEAEQERRIKELEKELRSAEEDREQRVRELRKLRKKLENVLGAVEV.

The protein belongs to the Mediator complex subunit 21 family. Component of the Mediator complex.

The protein resides in the nucleus. In terms of biological role, component of the Mediator complex, a coactivator involved in the regulated transcription of nearly all RNA polymerase II-dependent genes. Mediator functions as a bridge to convey information from gene-specific regulatory proteins to the basal RNA polymerase II transcription machinery. Mediator is recruited to promoters by direct interactions with regulatory proteins and serves as a scaffold for the assembly of a functional preinitiation complex with RNA polymerase II and the general transcription factors. The protein is Mediator of RNA polymerase II transcription subunit 21 (srb7) of Aspergillus oryzae (strain ATCC 42149 / RIB 40) (Yellow koji mold).